The sequence spans 354 residues: Selection and upkeep of intraepithelial T-cells protein 1 (354 aa).

The Ig-like V-type 1 domain maps to 23 to 141 (PSSEQFTVNS…EEAIAEVKVT (119 aa)). 2 disulfides stabilise this stretch: C49–C123 and C163–C217. Residues 161-233 (VECNSEGWFP…TGQEERTSIV (73 aa)) enclose the Ig-like C1-type 2 domain. 3 consecutive transmembrane segments (helical) span residues 243-263 (SVWI…IMMP), 283-303 (LIGI…TITL), and 326-346 (MTVM…LVYF).

Belongs to the SKINT family. Expressed in the thymus and skin.

It is found in the membrane. Its function is as follows. May act by engaging a cell surface molecule on immature T-cells in the embryonic thymus. The polypeptide is Selection and upkeep of intraepithelial T-cells protein 1 (SKINT1) (Macaca fascicularis (Crab-eating macaque)).